The following is a 1452-amino-acid chain: Receptor-type tyrosine-protein phosphatase mu (1452 aa).

The N-terminal stretch at 1–20 is a signal peptide; it reads MRTLGTCLVTLAGLLLTAAG. The Extracellular portion of the chain corresponds to 21–742; sequence ETFSGGCLFD…PEKQTDHTVK (722 aa). An MAM domain is found at 22 to 184; the sequence is TFSGGCLFDE…VKVLGHPCTR (163 aa). Cys27 and Cys36 are oxidised to a cystine. Asn72, Asn92, Asn131, and Asn249 each carry an N-linked (GlcNAc...) asparagine glycan. 2 disulfides stabilise this stretch: Cys96/Cys182 and Cys206/Cys260. The region spanning 186–277 is the Ig-like C2-type domain; it reads PHFLRIQNVE…VGISNYAELV (92 aa). Fibronectin type-III domains are found at residues 284 to 379, 382 to 480, 481 to 587, and 589 to 671; these read PIAP…CADP, GPRK…TDED, LPGA…SAPS, and PAYE…DSLQ. Residues Asn406, Asn414, Asn454, Asn534, Asn544, Asn598, Asn651, and Asn681 are each glycosylated (N-linked (GlcNAc...) asparagine). Residues 743-764 form a helical membrane-spanning segment; sequence IAGVIAGILLFVIIFLGVVLVM. Topologically, residues 765-1452 are cytoplasmic; that stretch reads KKRKLAKKRK…EVALEYLNSG (688 aa). Ser821 carries the phosphoserine modification. Tyrosine-protein phosphatase domains lie at 900–1154 and 1186–1448; these read FKEE…ILEA and IKEE…ALEY. Residues Asp1063, 1095-1101, and Gln1139 contribute to the substrate site; that span reads CSAGAGR. The Phosphocysteine intermediate role is filled by Cys1095. Residue Cys1389 is the Phosphocysteine intermediate of the active site.

Belongs to the protein-tyrosine phosphatase family. Receptor class 2B subfamily. In terms of assembly, homodimer. Most abundant in lung, less in brain and heart.

It localises to the cell membrane. It catalyses the reaction O-phospho-L-tyrosyl-[protein] + H2O = L-tyrosyl-[protein] + phosphate. Receptor protein-tyrosine phosphatase that mediates homotypic cell-cell interactions and plays a role in adipogenic differentiation via modulation of p120 catenin/CTNND1 phosphorylation. Promotes CTNND1 dephosphorylation and prevents its cytoplasmic localization where it inhibits SLC2A4 membrane trafficking. In turn, SLC2A4 is directed to the plasma membrane and performs its glucose transporter function. This chain is Receptor-type tyrosine-protein phosphatase mu (Ptprm), found in Mus musculus (Mouse).